Reading from the N-terminus, the 349-residue chain is Desmethyl-yatein O-methyltransferase (349 aa).

Positions 193, 216, 236, 237, 249, and 250 each coordinate S-adenosyl-L-homocysteine. The active-site Proton acceptor is histidine 254. Catalysis depends on residues glutamate 282 and glutamate 314.

It belongs to the class I-like SAM-binding methyltransferase superfamily. Cation-independent O-methyltransferase family. COMT subfamily. As to quaternary structure, homodimer. Mostly expressed in stems, and, to a lower extent, in leaves.

The catalysed reaction is (-)-5'-demethylyatein + S-adenosyl-L-methionine = (-)-yatein + S-adenosyl-L-homocysteine + H(+). It functions in the pathway aromatic compound metabolism; phenylpropanoid biosynthesis. O-methyltransferase involved in the biosynthesis of etoposide, a chemotherapeutic compound of the topoisomerase inhibitor family. Catalyzes the methylation of (-)-5'-demethylyatein to produce (-)-yatein. The chain is Desmethyl-yatein O-methyltransferase from Sinopodophyllum hexandrum (Himalayan may apple).